Here is a 3210-residue protein sequence, read N- to C-terminus: PF 1022-synthetase (3210 aa).

Residues 68 to 454 (VDDRRHAIGH…VKELDVVTAE (387 aa)) are condensation 1. The adenylation 1 stretch occupies residues 483 to 876 (AGDPNKAAVF…GRKDSQVKIR (394 aa)). The region spanning 1010-1086 (APATGIEVKL…GLVDVIGRDP (77 aa)) is the Carrier 1 domain. Serine 1047 bears the O-(pantetheine 4'-phosphoryl)serine mark. A condensation 2 region spans residues 1104–1534 (SFAQGRLWFL…RTPIAVLPLT (431 aa)). The interval 1563 to 2023 (FRKQVAAHPH…GRMDQQVKIR (461 aa)) is adenylation 2. The interval 2081 to 2236 (EGWKDFFESN…YLLEVVESLV (156 aa)) is S-adenosyl-L-methionine-dependent N-methyltransferase. 2 consecutive Carrier domains span residues 2570–2644 (DPFV…RQGL) and 2668–2742 (TPSD…RLTQ). O-(pantetheine 4'-phosphoryl)serine is present on residues serine 2604 and serine 2702. The condensation 3 stretch occupies residues 2788–3203 (LDVYPATQMQ…KRMLEELCGN (416 aa)). The interval 2976–3002 (VIKGNNNTTPPPPPQQQSTPSGAHHAS) is disordered.

It belongs to the NRP synthetase family. It depends on pantetheine 4'-phosphate as a cofactor.

The catalysed reaction is 2 (R)-3-phenyllactate + 2 (R)-lactate + 4 L-leucine + 4 S-adenosyl-L-methionine + 8 ATP = PF1022A + 8 AMP + 4 S-adenosyl-L-homocysteine + 8 diphosphate + 8 H(+). The enzyme catalyses 4 (R)-3-phenyllactate + 4 L-leucine + 4 S-adenosyl-L-methionine + 8 ATP = PF1022B + 8 AMP + 4 S-adenosyl-L-homocysteine + 8 diphosphate + 8 H(+). It catalyses the reaction 3 (R)-3-phenyllactate + (R)-lactate + 4 L-leucine + 4 S-adenosyl-L-methionine + 8 ATP = PF1022C + 8 AMP + 4 S-adenosyl-L-homocysteine + 8 diphosphate + 8 H(+). It carries out the reaction (R)-3-phenyllactate + 3 (R)-lactate + 4 L-leucine + 4 S-adenosyl-L-methionine + 8 ATP = PF1022D + 8 AMP + 4 S-adenosyl-L-homocysteine + 8 diphosphate + 8 H(+). The catalysed reaction is 4 (R)-lactate + 4 L-leucine + 4 S-adenosyl-L-methionine + 8 ATP = PF1022F + 8 AMP + 4 S-adenosyl-L-homocysteine + 8 diphosphate + 8 H(+). Functionally, nonribosomal peptide synthetase that synthesizes cyclooctadepsipeptides (CODPs) PF 1022 that show powerful broad-spectrum anthelmintic activity with low toxicity in animals. Couples 4 N-methyl-L-leucines and a varying content of alpha-D-hydroxy acids (D-lactates or D-phenyllactates) in an alternative fashion. The enzyme is capable of synthesizing all known natural cyclooctadepsipeptides of the PF1022 type differing in the content of D-lactate and D-phenyllactate, using from 4 D-lactates (PF 1022F) to 4 D-phenyllactates (PF 1022B), respectively. The formation of different PF-related compounds is mainly controlled by the molar ratio of the hydroxy acids. N-methylation of the substrate L-leucine takes place after covalent binding prior to peptide bond formation. In Rosellinia sp. (Mycelia sterilia), this protein is PF 1022-synthetase.